The primary structure comprises 735 residues: Cyclic nucleotide-gated channel cone photoreceptor subunit alpha (735 aa).

Residues 1 to 214 are Cytoplasmic-facing; sequence MAKINTQHSY…PSSNMYYNWL (214 aa). The interval 142 to 191 is disordered; it reads VNFSNNTNEDKKEEKKEVKEEKKEEKKEEKKEEKKDDKKDDKKDDKKDDK. Residues 149-191 show a composition bias toward basic and acidic residues; the sequence is NEDKKEEKKEVKEEKKEEKKEEKKEEKKDDKKDDKKDDKKDDK. Residues 215–236 traverse the membrane as a helical segment; that stretch reads TIIAAPVFYNWCMLICRACFDE. The Extracellular segment spans residues 237–246; that stretch reads LQIDHIKLWL. Residues 247 to 267 form a helical membrane-spanning segment; it reads FLDYCSDIIYVFDMFVRFRTG. Residues 268 to 292 lie on the Cytoplasmic side of the membrane; sequence FLEQGLLVKDEKKLRDHYTQTVQFK. Residues 293–311 traverse the membrane as a helical segment; that stretch reads LDVLSLLPTDLAYLKLGLN. Over 312–316 the chain is Extracellular; that stretch reads YPELR. A helical membrane pass occupies residues 317-335; sequence FNRLLRIARLFEFFDRTET. Residues 336-342 lie on the Cytoplasmic side of the membrane; that stretch reads RTNYPNM. Residues 343 to 366 traverse the membrane as a helical segment; sequence FRIGNLVLYILIIIHWNACIYFAI. Residues 367-389 lie on the Extracellular side of the membrane; the sequence is SKVIGFGTDSWVYPNVSIPEYGR. The next 2 helical transmembrane spans lie at 390-424 and 425-449; these read LSRK…LFVV and IDFL…SNMN. The Cytoplasmic segment spans residues 450–735; the sequence is ASRAEFQAKV…PEKPEEQKKD (286 aa). Residues 532–654, Glu591, and Arg606 each bind 3',5'-cyclic GMP; that span reads LLIE…DNLI. Residues 715–735 are disordered; that stretch reads GSGSLSVGEPEPEKPEEQKKD. The span at 725-735 shows a compositional bias: basic and acidic residues; the sequence is EPEKPEEQKKD.

Belongs to the cyclic nucleotide-gated cation channel (TC 1.A.1.5) family.

The protein localises to the membrane. Its function is as follows. Visual signal transduction is mediated by a G-protein coupled cascade using cGMP as second messenger. This protein can be activated by cyclic GMP which leads to an opening of the cation channel and thereby causing a depolarization of cone photoreceptors. This is Cyclic nucleotide-gated channel cone photoreceptor subunit alpha from Gallus gallus (Chicken).